A 310-amino-acid chain; its full sequence is Ribonuclease HIII (310 aa).

The RNase H type-2 domain maps to 90 to 306 (FQCIGSDEAG…RKKAENLVQK (217 aa)). A divalent metal cation is bound by residues aspartate 96, glutamate 97, and aspartate 201.

Belongs to the RNase HII family. RnhC subfamily. Mn(2+) is required as a cofactor. It depends on Mg(2+) as a cofactor.

It localises to the cytoplasm. The catalysed reaction is Endonucleolytic cleavage to 5'-phosphomonoester.. Its function is as follows. Endonuclease that specifically degrades the RNA of RNA-DNA hybrids. This is Ribonuclease HIII from Staphylococcus saprophyticus subsp. saprophyticus (strain ATCC 15305 / DSM 20229 / NCIMB 8711 / NCTC 7292 / S-41).